The sequence spans 338 residues: MEPGIPPMIDKAPAYSHVLIAGGIGGATADFLMHSLDTVKTRQQAALYTNKYNGMVKCYSTILCEEGVFHGLYSGVCPMLIGSLPATALFFSSYEYTKRHLMSNYNLPETLCFLLAGFVGDLFASVVYVPSEVLKTRLQLQGRYNNPHFQSNYNYPSFRGAVKQIAKQEGMKTFFYGYRATILRDIPFSGFQLLFYEKLRQVAQKECGQKDIGVFRELITGSLAGAGAGFLTTPLDVAKTRLQTMIRTTDKVSDDINSGRYFFAKDENSKSKSAASLVKPKIGIRHVLGGLYKSEGLLGLFRGFGPRIFWTSSQSSLMFVFYEGIIRLFNKNNVLERD.

The next 6 helical transmembrane spans lie at 13-33 (PAYS…DFLM), 71-91 (GLYS…ALFF), 110-130 (TLCF…VYVP), 176-196 (YGYR…LLFY), 218-238 (LITG…LDVA), and 301-321 (FRGF…MFVF). Solcar repeat units follow at residues 13–100 (PAYS…TKRH), 108–202 (PETL…LRQV), and 216–328 (RELI…IIRL).

Belongs to the mitochondrial carrier (TC 2.A.29) family.

It is found in the mitochondrion inner membrane. Mitochondrial solute carriers shuttle metabolites, nucleotides, and cofactors through the mitochondrial inner membrane. This is an uncharacterized protein from Schizosaccharomyces pombe (strain 972 / ATCC 24843) (Fission yeast).